The following is a 670-amino-acid chain: MDTFQLDSRFKPAGDQPEAIRQMVEGLEAGLSHQTLLGVTGSGKTFSIANVIAQVQRPTLVLAPNKTLAAQLYGEFKTFFPHNSVEYFVSYYDYYQPEAYVPSSDTYIEKDSSINDHIEQMRLSATKALLERPDAIIVATVSSIYGLGDPASYLKMVLHLDRGDRIDQRELLRRLTSLQYTRNDMDFARATFRVRGDVIDIFPAESDLEAIRVELFDDEVESLSAFDPLTGEVIRKLPRFTFYPKSHYVTPRETLLEAVDQIKAELKERLDYLRNNNKLVEAQRLEQRTRFDLEMILELGYCNGIENYSRYLSGRAPGEPPPTLYDYLPANSLLVIDESHVSVPQVGAMFKGDRSRKETLVEYGFRLPSALDNRPLRFEEWEAVSPQTIFVSATPGPYEAEHAGRVIEQVVRPTGLVDPEIEVRPAMTQVDDLLSQIRQRVAKDERVLVTTLTKRMAEDLTDYLGDHDVRVRYLHSDIDTVERVEIIRDLRAGAFDVLVGINLLREGLDMPEVSLVAILDADKEGFLRSERSLIQTIGRAARNLHGKAILYADNVTGSMQRAIDETERRRAKQIAFNEAHGIVPKGVRKDIKDILEGAVVPGARGKRKGVAKVAEESGRYENELRSPSEISKRIRQLEEKMYQLARDLEFEAAAQLRDEIQTLRERLVNV.

One can recognise a Helicase ATP-binding domain in the interval 25–412; sequence EGLEAGLSHQ…AGRVIEQVVR (388 aa). 38-45 contacts ATP; sequence GVTGSGKT. Positions 91–114 match the Beta-hairpin motif; that stretch reads YYDYYQPEAYVPSSDTYIEKDSSI. The Helicase C-terminal domain occupies 429–582; sequence QVDDLLSQIR…QIAFNEAHGI (154 aa). The UVR domain occupies 631–666; sequence SKRIRQLEEKMYQLARDLEFEAAAQLRDEIQTLRER.

This sequence belongs to the UvrB family. As to quaternary structure, forms a heterotetramer with UvrA during the search for lesions. Interacts with UvrC in an incision complex.

It is found in the cytoplasm. The UvrABC repair system catalyzes the recognition and processing of DNA lesions. A damage recognition complex composed of 2 UvrA and 2 UvrB subunits scans DNA for abnormalities. Upon binding of the UvrA(2)B(2) complex to a putative damaged site, the DNA wraps around one UvrB monomer. DNA wrap is dependent on ATP binding by UvrB and probably causes local melting of the DNA helix, facilitating insertion of UvrB beta-hairpin between the DNA strands. Then UvrB probes one DNA strand for the presence of a lesion. If a lesion is found the UvrA subunits dissociate and the UvrB-DNA preincision complex is formed. This complex is subsequently bound by UvrC and the second UvrB is released. If no lesion is found, the DNA wraps around the other UvrB subunit that will check the other stand for damage. The sequence is that of UvrABC system protein B from Pseudomonas aeruginosa (strain ATCC 15692 / DSM 22644 / CIP 104116 / JCM 14847 / LMG 12228 / 1C / PRS 101 / PAO1).